Here is a 446-residue protein sequence, read N- to C-terminus: Ribosomal protein uS12 methylthiotransferase RimO (446 aa).

The 116-residue stretch at 4–119 (YKVGMVSLGC…IDKVIKEFIE (116 aa)) folds into the MTTase N-terminal domain. [4Fe-4S] cluster-binding residues include C13, C48, C82, C157, C161, and C164. Residues 143–373 (TTQKESAYIR…MLSQEKISND (231 aa)) form the Radical SAM core domain. One can recognise a TRAM domain in the interval 376–442 (KLKVNKKYDI…DYDLIGVVED (67 aa)).

The protein belongs to the methylthiotransferase family. RimO subfamily. [4Fe-4S] cluster is required as a cofactor.

Its subcellular location is the cytoplasm. The catalysed reaction is L-aspartate(89)-[ribosomal protein uS12]-hydrogen + (sulfur carrier)-SH + AH2 + 2 S-adenosyl-L-methionine = 3-methylsulfanyl-L-aspartate(89)-[ribosomal protein uS12]-hydrogen + (sulfur carrier)-H + 5'-deoxyadenosine + L-methionine + A + S-adenosyl-L-homocysteine + 2 H(+). In terms of biological role, catalyzes the methylthiolation of an aspartic acid residue of ribosomal protein uS12. The chain is Ribosomal protein uS12 methylthiotransferase RimO from Clostridium botulinum (strain Eklund 17B / Type B).